A 628-amino-acid polypeptide reads, in one-letter code: Eukaryotic peptide chain release factor GTP-binding subunit ERF3B (628 aa).

The span at 1–10 shows a compositional bias: low complexity; sequence MDSGSSSSDS. Disordered regions lie at residues 1–49, 72–124, and 146–195; these read MDSG…SAFS, FLRG…LEGS, and LEES…VIVP. In terms of domain architecture, tr-type G spans 201-425; that stretch reads KEHVNVVFIG…YLDNLPNFNR (225 aa). A G1 region spans residues 210–217; sequence GHVDAGKS. Residue 213–218 participates in GTP binding; that stretch reads DAGKST. The G2 stretch occupies residues 266–270; that stretch reads GKTVE. A G3 region spans residues 287–290; the sequence is DAPG. Residues 349–352 and 391–393 contribute to the GTP site; these read NKMD and SGL. The segment at 349–352 is G4; that stretch reads NKMD. The interval 391–393 is G5; that stretch reads SGL.

The protein belongs to the TRAFAC class translation factor GTPase superfamily. Classic translation factor GTPase family. ERF3 subfamily. As to quaternary structure, component of the eRF1-eRF3-GTP ternary complex, composed of ETF1/ERF1 and ERF3 (GSPT1/ERF3A or GSPT2/ERF3B) and GTP. Component of the transient SURF (SMG1-UPF1-eRF1-eRF3) complex. Interacts with UPF1 and PABPC1. Highly expressed in IUCC stage II colorectal cancer (CRC).

It is found in the cytoplasm. It carries out the reaction GTP + H2O = GDP + phosphate + H(+). GTPase component of the eRF1-eRF3-GTP ternary complex, a ternary complex that mediates translation termination in response to the termination codons UAA, UAG and UGA. GSPT2/ERF3B mediates ETF1/ERF1 delivery to stop codons: The eRF1-eRF3-GTP complex binds to a stop codon in the ribosomal A-site. GTP hydrolysis by GSPT2/ERF3B induces a conformational change that leads to its dissociation, permitting ETF1/ERF1 to accommodate fully in the A-site. Component of the transient SURF complex which recruits UPF1 to stalled ribosomes in the context of nonsense-mediated decay (NMD) of mRNAs containing premature stop codons. This chain is Eukaryotic peptide chain release factor GTP-binding subunit ERF3B (GSPT2), found in Homo sapiens (Human).